A 256-amino-acid chain; its full sequence is Triosephosphate isomerase (256 aa).

12-14 provides a ligand contact to substrate; that stretch reads NWK. H99 acts as the Electrophile in catalysis. The Proton acceptor role is filled by E169. Substrate contacts are provided by residues G175, S214, and 235–236; that span reads GG.

It belongs to the triosephosphate isomerase family. Homodimer.

It is found in the cytoplasm. The enzyme catalyses D-glyceraldehyde 3-phosphate = dihydroxyacetone phosphate. It participates in carbohydrate biosynthesis; gluconeogenesis. It functions in the pathway carbohydrate degradation; glycolysis; D-glyceraldehyde 3-phosphate from glycerone phosphate: step 1/1. In terms of biological role, involved in the gluconeogenesis. Catalyzes stereospecifically the conversion of dihydroxyacetone phosphate (DHAP) to D-glyceraldehyde-3-phosphate (G3P). This is Triosephosphate isomerase from Rhizobium etli (strain ATCC 51251 / DSM 11541 / JCM 21823 / NBRC 15573 / CFN 42).